The following is a 268-amino-acid chain: TodF product hydratase (268 aa).

This sequence belongs to the hydratase/decarboxylase family.

Its pathway is xenobiotic degradation; toluene degradation. In terms of biological role, converts the product of 2-hydroxy-6-oxo-2,4-heptadienoate hydrolase. This is TodF product hydratase (todJ) from Pseudomonas putida (strain ATCC 700007 / DSM 6899 / JCM 31910 / BCRC 17059 / LMG 24140 / F1).